Reading from the N-terminus, the 381-residue chain is Queuine tRNA-ribosyltransferase (381 aa).

D96 (proton acceptor) is an active-site residue. Residues 96-100 (DSGGF), D150, Q193, and G220 each bind substrate. The tract at residues 251 to 257 (GVGSPDA) is RNA binding. Residue D270 is the Nucleophile of the active site. The interval 275–279 (TRIAR) is RNA binding; important for wobble base 34 recognition. The Zn(2+) site is built by C308, C310, C313, and H339.

The protein belongs to the queuine tRNA-ribosyltransferase family. Homodimer. Within each dimer, one monomer is responsible for RNA recognition and catalysis, while the other monomer binds to the replacement base PreQ1. Requires Zn(2+) as cofactor.

It catalyses the reaction 7-aminomethyl-7-carbaguanine + guanosine(34) in tRNA = 7-aminomethyl-7-carbaguanosine(34) in tRNA + guanine. It functions in the pathway tRNA modification; tRNA-queuosine biosynthesis. Catalyzes the base-exchange of a guanine (G) residue with the queuine precursor 7-aminomethyl-7-deazaguanine (PreQ1) at position 34 (anticodon wobble position) in tRNAs with GU(N) anticodons (tRNA-Asp, -Asn, -His and -Tyr). Catalysis occurs through a double-displacement mechanism. The nucleophile active site attacks the C1' of nucleotide 34 to detach the guanine base from the RNA, forming a covalent enzyme-RNA intermediate. The proton acceptor active site deprotonates the incoming PreQ1, allowing a nucleophilic attack on the C1' of the ribose to form the product. After dissociation, two additional enzymatic reactions on the tRNA convert PreQ1 to queuine (Q), resulting in the hypermodified nucleoside queuosine (7-(((4,5-cis-dihydroxy-2-cyclopenten-1-yl)amino)methyl)-7-deazaguanosine). The chain is Queuine tRNA-ribosyltransferase from Bacillus subtilis (strain 168).